The chain runs to 462 residues: MATTTGAKRGIWPMIRRIAASDRISGLIMLGFALAGLVLANLPLTAHAFEAVAETHVFIPHTNLDLPIGHWAQDGLLTIFFLTVGLELKQELTTGSLANPKAAAVPMLCAVGGMITPPILFLATTALFSQFGPGEPGSLILATTGSSIPFAEMSHGWAVPTATDIAFSLAVLALFAKALPGSIRAFLMTLATVDDLLAIILIAVFFSSVNAWYWFIGIAVCAVVWAHLVRLKKVPWIAVGVVGILAWIMMFEAGIHPTLAGVLVGLLTPARVMHGEYSPRAERYADKLKPFSALLALPIFALFATGVHFESMSPLLLLSPLVIALIVALVVGKPLGIIVTAWLATHVGGLKMAKGLRVRDMIPAAVACGIGFTVSFLIASLAYTNQELSAEARFGVLVASLIAAAISGVLLSRQSKRFEQAAAVAAAEADAESDVNTHSDELAEHSITLADGTESVEIDFRR.

Helical transmembrane passes span 24 to 44, 66 to 86, 102 to 122, 156 to 176, 196 to 216, 235 to 255, 256 to 275, 290 to 310, 312 to 332, 361 to 381, and 392 to 412; these read ISGL…NLPL, LPIG…TVGL, AAAV…ILFL, GWAV…ALFA, LLAI…YWFI, PWIA…EAGI, HPTL…VMHG, PFSA…VHFE, MSPL…LVVG, MIPA…IASL, and ARFG…VLLS.

This sequence belongs to the NhaA Na(+)/H(+) (TC 2.A.33) antiporter family.

Its subcellular location is the cell membrane. It catalyses the reaction Na(+)(in) + 2 H(+)(out) = Na(+)(out) + 2 H(+)(in). Its function is as follows. Na(+)/H(+) antiporter that extrudes sodium in exchange for external protons. In Bifidobacterium breve (strain NCIMB 8807 / UCC2003), this protein is Na(+)/H(+) antiporter NhaA.